The primary structure comprises 373 residues: Peptide chain release factor 2 (373 aa).

Q252 carries the N5-methylglutamine modification.

This sequence belongs to the prokaryotic/mitochondrial release factor family. Post-translationally, methylated by PrmC. Methylation increases the termination efficiency of RF2.

Its subcellular location is the cytoplasm. Its function is as follows. Peptide chain release factor 2 directs the termination of translation in response to the peptide chain termination codons UGA and UAA. This is Peptide chain release factor 2 from Staphylococcus saprophyticus subsp. saprophyticus (strain ATCC 15305 / DSM 20229 / NCIMB 8711 / NCTC 7292 / S-41).